We begin with the raw amino-acid sequence, 231 residues long: Ribonuclease 3 (231 aa).

One can recognise an RNase III domain in the interval 6–135 (AAMLKERFGI…FVGALYLDQG (130 aa)). Glu48 contributes to the Mg(2+) binding site. Asp52 is an active-site residue. Residues Asp121 and Glu124 each coordinate Mg(2+). Glu124 is a catalytic residue. The DRBM domain occupies 161–230 (DYKTTLQEYL…ARQAYSQLQQ (70 aa)). The disordered stretch occupies residues 209–231 (WGHSKKEAEQSAARQAYSQLQQK). The segment covering 220–231 (AARQAYSQLQQK) has biased composition (polar residues).

Belongs to the ribonuclease III family. Homodimer. Requires Mg(2+) as cofactor.

Its subcellular location is the cytoplasm. The enzyme catalyses Endonucleolytic cleavage to 5'-phosphomonoester.. Functionally, digests double-stranded RNA. Involved in the processing of primary rRNA transcript to yield the immediate precursors to the large and small rRNAs (23S and 16S). Processes some mRNAs, and tRNAs when they are encoded in the rRNA operon. Processes pre-crRNA and tracrRNA of type II CRISPR loci if present in the organism. In Lactiplantibacillus plantarum (strain ATCC BAA-793 / NCIMB 8826 / WCFS1) (Lactobacillus plantarum), this protein is Ribonuclease 3.